A 433-amino-acid chain; its full sequence is Energy-coupling factor transporter ATP-binding protein EcfA2 (433 aa).

The region spanning 25-389 (VRVKNLYAVY…QHIINSTSIQ (365 aa)) is the ABC transporter domain. 62 to 69 (GNSGSGKS) is an ATP binding site.

It belongs to the ABC transporter superfamily. Energy-coupling factor EcfA family. Forms a stable energy-coupling factor (ECF) transporter complex composed of 2 membrane-embedded substrate-binding proteins (S component), 2 ATP-binding proteins (A component) and 2 transmembrane proteins (T component).

It localises to the cell membrane. Functionally, ATP-binding (A) component of a common energy-coupling factor (ECF) ABC-transporter complex. Unlike classic ABC transporters this ECF transporter provides the energy necessary to transport a number of different substrates. The polypeptide is Energy-coupling factor transporter ATP-binding protein EcfA2 (Ureaplasma parvum serovar 3 (strain ATCC 700970)).